A 635-amino-acid polypeptide reads, in one-letter code: Threonine--tRNA ligase (635 aa).

A TGS domain is found at 1–61; sequence MVSIRLPDGS…DHDVALAIVT (61 aa). The interval 242–533 is catalytic; it reads DHRKLGKQLD…LIEHHAGAMP (292 aa). 3 residues coordinate Zn(2+): Cys-333, His-384, and His-510.

This sequence belongs to the class-II aminoacyl-tRNA synthetase family. As to quaternary structure, homodimer. Zn(2+) serves as cofactor.

It is found in the cytoplasm. The catalysed reaction is tRNA(Thr) + L-threonine + ATP = L-threonyl-tRNA(Thr) + AMP + diphosphate + H(+). In terms of biological role, catalyzes the attachment of threonine to tRNA(Thr) in a two-step reaction: L-threonine is first activated by ATP to form Thr-AMP and then transferred to the acceptor end of tRNA(Thr). Also edits incorrectly charged L-seryl-tRNA(Thr). This chain is Threonine--tRNA ligase, found in Paraburkholderia xenovorans (strain LB400).